A 20-amino-acid polypeptide reads, in one-letter code: Octopamine receptor (20 aa).

The protein belongs to the G-protein coupled receptor 1 family.

Its subcellular location is the cell membrane. Functionally, putative receptor for octopamine. Octopamine (OA) is a neurotransmitter, neurohormone, and neuromodulator in invertebrates. The activity of this receptor is mediated by G proteins which activate adenylyl cyclase. In Photinus pyralis (Common eastern firefly), this protein is Octopamine receptor.